Here is a 624-residue protein sequence, read N- to C-terminus: Ubiquitin-associated and SH3 domain-containing protein A (624 aa).

The 42-residue stretch at 19 to 60 folds into the UBA domain; the sequence is RSTPSLLDPLLAMGFPTHTALKALAATGRKTAEAAADWLHGH. Residues 238–303 form the SH3 domain; that stretch reads VHYQTLKALF…PENYTERANE (66 aa). A phosphatase-like region spans residues 358–624; that stretch reads RRGILVVRHG…FNWRNWISSN (267 aa).

In terms of assembly, homodimer or homooligomer. Interacts with CBL. Part of a complex containing CBL and activated EGFR. Interacts with ubiquitin and with mono-ubiquitinated proteins. Interacts with dynamin.

Its subcellular location is the cytoplasm. It localises to the nucleus. Functionally, interferes with CBL-mediated down-regulation and degradation of receptor-type tyrosine kinases. Promotes accumulation of activated target receptors, such as T-cell receptors, EGFR and PDGFRB, on the cell surface. May inhibit dynamin-dependent endocytic pathways by functionally sequestering dynamin via its SH3 domain. Exhibits negligible protein tyrosine phosphatase activity at neutral pH. May act as a dominant-negative regulator of UBASH3B-dependent dephosphorylation. The sequence is that of Ubiquitin-associated and SH3 domain-containing protein A (Ubash3a) from Mus musculus (Mouse).